A 718-amino-acid polypeptide reads, in one-letter code: Catalase-peroxidase 1 (718 aa).

The tryptophyl-tyrosyl-methioninium (Trp-Tyr) (with M-247) cross-link spans 93-221; that stretch reads WHSAGTYRIA…LAAVMMGLIY (129 aa). Residue His94 is the Proton acceptor of the active site. A cross-link (tryptophyl-tyrosyl-methioninium (Tyr-Met) (with W-93)) is located at residues 221-247; the sequence is YVNPEGVDGNPDPLKTAQDMRVTFARM. A heme b-binding site is contributed by His262.

The protein belongs to the peroxidase family. Peroxidase/catalase subfamily. As to quaternary structure, homodimer or homotetramer. Requires heme b as cofactor. In terms of processing, formation of the three residue Trp-Tyr-Met cross-link is important for the catalase, but not the peroxidase activity of the enzyme.

The enzyme catalyses H2O2 + AH2 = A + 2 H2O. It catalyses the reaction 2 H2O2 = O2 + 2 H2O. Its function is as follows. Bifunctional enzyme with both catalase and broad-spectrum peroxidase activity. In Shewanella amazonensis (strain ATCC BAA-1098 / SB2B), this protein is Catalase-peroxidase 1.